We begin with the raw amino-acid sequence, 357 residues long: UPF0283 membrane protein BOV_0999 (357 aa).

The interval 1 to 36 (MSDKTPRKPTAFRLEQPARVSAASEQEEPRRPRAVK) is disordered. Basic and acidic residues predominate over residues 27-36 (EEPRRPRAVK). Helical transmembrane passes span 78–98 (ILFG…TEDL) and 109–129 (LGWT…AIIL).

The protein belongs to the UPF0283 family.

The protein localises to the cell inner membrane. This Brucella ovis (strain ATCC 25840 / 63/290 / NCTC 10512) protein is UPF0283 membrane protein BOV_0999.